We begin with the raw amino-acid sequence, 559 residues long: DNA ligase (559 aa).

Glu247 is a binding site for ATP. The active-site N6-AMP-lysine intermediate is Lys249. ATP-binding residues include Arg254, Arg269, Glu299, Phe339, Arg414, and Lys420.

It belongs to the ATP-dependent DNA ligase family. In terms of assembly, monomer. Mg(2+) is required as a cofactor.

The catalysed reaction is ATP + (deoxyribonucleotide)n-3'-hydroxyl + 5'-phospho-(deoxyribonucleotide)m = (deoxyribonucleotide)n+m + AMP + diphosphate.. It catalyses the reaction NAD(+) + (deoxyribonucleotide)n-3'-hydroxyl + 5'-phospho-(deoxyribonucleotide)m = (deoxyribonucleotide)n+m + AMP + beta-nicotinamide D-nucleotide.. Its function is as follows. DNA ligase that seals nicks in double-stranded DNA during DNA replication, DNA recombination and DNA repair. Can also use NAD, but less efficiently than ATP. The protein is DNA ligase of Thermococcus kodakarensis (strain ATCC BAA-918 / JCM 12380 / KOD1) (Pyrococcus kodakaraensis (strain KOD1)).